The primary structure comprises 115 residues: DNA-binding protein PYRAB09250 (115 aa).

It belongs to the PDCD5 family.

In Pyrococcus abyssi (strain GE5 / Orsay), this protein is DNA-binding protein PYRAB09250.